The chain runs to 507 residues: DNA nucleotidylexotransferase (507 aa).

Residues 11–17 (PLRKKAK) carry the Nuclear localization signal motif. The BRCT domain occupies 27–124 (QHNVKFKEIV…RPVEIQNRHL (98 aa)). The segment at 254–258 (VGLKT) is involved in DNA binding. A 2'-deoxyribonucleoside 5'-triphosphate contacts are provided by residues 329–334 (GFRRGK) and 338–341 (HDVD). D339, D341, and D431 together coordinate Mg(2+). 446 to 447 (GW) lines the a 2'-deoxyribonucleoside 5'-triphosphate pocket.

It belongs to the DNA polymerase type-X family. Mg(2+) is required as a cofactor. Found in the thymus and not in the spleen, kidney, intestine, or liver.

Its subcellular location is the nucleus. The enzyme catalyses DNA(n) + a 2'-deoxyribonucleoside 5'-triphosphate = DNA(n+1) + diphosphate. Template-independent DNA polymerase which catalyzes the random addition of deoxynucleoside 5'-triphosphate to the 3'-end of a DNA initiator. One of the in vivo functions of this enzyme is the addition of nucleotides at the junction (N region) of rearranged Ig heavy chain and T-cell receptor gene segments during the maturation of B- and T-cells. The sequence is that of DNA nucleotidylexotransferase (dntt) from Xenopus laevis (African clawed frog).